Consider the following 401-residue polypeptide: Enoyl-[acyl-carrier-protein] reductase [NADH] (401 aa).

NAD(+) contacts are provided by residues 48-53 (GASSGY), 74-75 (FE), 111-112 (DA), and 140-141 (LA). Residue Y226 coordinates substrate. The Proton donor role is filled by Y236. Residues K245 and 274–276 (VVT) each bind NAD(+).

Belongs to the TER reductase family. Monomer.

The catalysed reaction is a 2,3-saturated acyl-[ACP] + NAD(+) = a (2E)-enoyl-[ACP] + NADH + H(+). It participates in lipid metabolism; fatty acid biosynthesis. Its function is as follows. Involved in the final reduction of the elongation cycle of fatty acid synthesis (FAS II). Catalyzes the reduction of a carbon-carbon double bond in an enoyl moiety that is covalently linked to an acyl carrier protein (ACP). The sequence is that of Enoyl-[acyl-carrier-protein] reductase [NADH] from Xylella fastidiosa (strain Temecula1 / ATCC 700964).